A 132-amino-acid polypeptide reads, in one-letter code: uncharacterized protein (132 aa).

4 helical membrane passes run 6–26 (WIYAVFTILIIGLGLGSRAFS), 34–54 (NTYLGDSLWAAMIFTGCGFLF), 59–79 (TMITGIISLSFCFVIEFSQLY), and 106–126 (IEAYTIGIAACAAIELLVLGI).

The protein localises to the cell membrane. This is an uncharacterized protein from Bacillus subtilis (strain 168).